The primary structure comprises 114 residues: Astacin-like metalloprotease toxin 4 (114 aa).

The Peptidase M12A domain occupies 1–114; the sequence is RETNENDYVD…GLLCLFKGSV (114 aa). A disulfide bridge links Cys-17 with Cys-38. His-46 serves as a coordination point for Zn(2+). Residue Glu-47 is part of the active site. Zn(2+) contacts are provided by His-50 and His-56. N-linked (GlcNAc...) asparagine glycosylation is present at Asn-88.

Monomer. The cofactor is Zn(2+). In terms of tissue distribution, expressed by the venom gland.

It is found in the secreted. Inhibited by 1,10-phenanthroline. Its function is as follows. Zinc metalloprotease. Provoques deadhesion of endothelial cells from cell cultures, and also degradation of fibronectin, fibrinogen and gelatin in vitro. Its role in the venom is not fully understood but it might act as a spreading factor that facilitates diffusion of other venom toxins. Alternatively, it might be involved in the proteolytic processing of other venom toxins or it might play a role in extra-oral digestion of prey. This chain is Astacin-like metalloprotease toxin 4, found in Loxosceles laeta (South American recluse spider).